The following is a 170-amino-acid chain: Cysteine-rich venom protein VAR4 (170 aa).

Residues 1–22 (MILLKLYLTLAAILCQSRGTTS) form the signal peptide. An SCP domain is found at 41–169 (NKHNDLRRTV…PLKYFLVCQY (129 aa)). Intrachain disulfides connect cysteine 77–cysteine 156, cysteine 95–cysteine 170, and cysteine 151–cysteine 167.

It belongs to the CRISP family. Post-translationally, contains 8 disulfide bonds. As to expression, expressed by the venom gland.

The protein resides in the secreted. Its function is as follows. Blocks ryanodine receptors, and potassium channels. The protein is Cysteine-rich venom protein VAR4 of Varanus acanthurus (Ridge-tailed monitor).